A 98-amino-acid chain; its full sequence is NADH-ubiquinone oxidoreductase chain 4L (98 aa).

3 helical membrane-spanning segments follow: residues 1-21 (MSMV…GLLV), 30-50 (LLCL…TILI), and 61-81 (IILL…LVMV).

It belongs to the complex I subunit 4L family. In terms of assembly, core subunit of respiratory chain NADH dehydrogenase (Complex I) which is composed of 45 different subunits.

It localises to the mitochondrion inner membrane. The catalysed reaction is a ubiquinone + NADH + 5 H(+)(in) = a ubiquinol + NAD(+) + 4 H(+)(out). Its function is as follows. Core subunit of the mitochondrial membrane respiratory chain NADH dehydrogenase (Complex I) which catalyzes electron transfer from NADH through the respiratory chain, using ubiquinone as an electron acceptor. Part of the enzyme membrane arm which is embedded in the lipid bilayer and involved in proton translocation. The sequence is that of NADH-ubiquinone oxidoreductase chain 4L (MT-ND4L) from Pagophilus groenlandicus (Harp seal).